Reading from the N-terminus, the 84-residue chain is Cell division topological specificity factor (84 aa).

It belongs to the MinE family.

Its function is as follows. Prevents the cell division inhibition by proteins MinC and MinD at internal division sites while permitting inhibition at polar sites. This ensures cell division at the proper site by restricting the formation of a division septum at the midpoint of the long axis of the cell. In Azotobacter vinelandii (strain DJ / ATCC BAA-1303), this protein is Cell division topological specificity factor.